Here is a 476-residue protein sequence, read N- to C-terminus: MEFESVIGLEVHAELLTNTKIYCGCTTEFGGKPNTHVCPVCLGLPGSLPQLNKRVLELGIKAGLALNCKITKVGRMDRKNYFYPDCPKNYQITQDELPICRDGYIDIELESGEVKRIGIERIHIEEDAGKLLHTKRGTLVDFNRAGVPLIEVVSKPDIRTPEEATLYLTKLRSILSSAQISDCKMEEGSLRCDGNISIRERGTEPFGIRSEIKNMNSFKALEKALNYEFDRQVEAVTNGEALSVETRRWDETNNKTIVMRSKEQANDYRYFPEGDLVTLNVSDEWIEEIRKTIPELPYQKADRFVKEYGLPKYDAHVLTLTDAMADYFDECAKLSGDPKAASNWIMGDISRLMKEESTWVEDLKFSPKELAELIEVIKDGTISSAIGKKVLEDMFAEGKSPKTIIDEKGLKQNNDEDAIRQLVNKVLDENPQVIEQYKSGRTRILGFAVGQVMKETKGQANPGIVNKLVTEEVEKR.

Belongs to the GatB/GatE family. GatB subfamily. As to quaternary structure, heterotrimer of A, B and C subunits.

The catalysed reaction is L-glutamyl-tRNA(Gln) + L-glutamine + ATP + H2O = L-glutaminyl-tRNA(Gln) + L-glutamate + ADP + phosphate + H(+). It catalyses the reaction L-aspartyl-tRNA(Asn) + L-glutamine + ATP + H2O = L-asparaginyl-tRNA(Asn) + L-glutamate + ADP + phosphate + 2 H(+). Its function is as follows. Allows the formation of correctly charged Asn-tRNA(Asn) or Gln-tRNA(Gln) through the transamidation of misacylated Asp-tRNA(Asn) or Glu-tRNA(Gln) in organisms which lack either or both of asparaginyl-tRNA or glutaminyl-tRNA synthetases. The reaction takes place in the presence of glutamine and ATP through an activated phospho-Asp-tRNA(Asn) or phospho-Glu-tRNA(Gln). The chain is Aspartyl/glutamyl-tRNA(Asn/Gln) amidotransferase subunit B from Clostridium botulinum (strain Eklund 17B / Type B).